Reading from the N-terminus, the 334-residue chain is MLNTLIVGASGYAGAELVTYVNRHPHMNITALTVSAQSNDAGKLISDLHPQLKGIVELPLQPMSDISEFSPGVDVVFLATAHEVSHDLAPQFLEAGCVVFDLSGAFRVNDATFYEKYYGFTHQYPELLEQAAYGLAEWCGNKLKEANLIAVPGCYPTAAQLALKPLIDADLLDLNQWPVINATSGVSGAGRKAAISNSFCEVSLQPYGVFTHRHQPEIATHLGADVIFTPHLGNFPRGILETITCRLKSGVTQAQVAQALQQAYAHKPLVRLYDKGVPALKNVVGLPFCDIGFAVQGEHLIIVATEDNLLKGAAAQAVQCANIRFGYAETQSLI.

Residue cysteine 154 is part of the active site.

Belongs to the NAGSA dehydrogenase family. Type 1 subfamily.

Its subcellular location is the cytoplasm. It catalyses the reaction N-acetyl-L-glutamate 5-semialdehyde + phosphate + NADP(+) = N-acetyl-L-glutamyl 5-phosphate + NADPH + H(+). Its pathway is amino-acid biosynthesis; L-arginine biosynthesis; N(2)-acetyl-L-ornithine from L-glutamate: step 3/4. Functionally, catalyzes the NADPH-dependent reduction of N-acetyl-5-glutamyl phosphate to yield N-acetyl-L-glutamate 5-semialdehyde. In Shigella flexneri, this protein is N-acetyl-gamma-glutamyl-phosphate reductase.